Here is a 355-residue protein sequence, read N- to C-terminus: Protein RecA (355 aa).

An ATP-binding site is contributed by 66–73 (GPESSGKT). The tract at residues 331-355 (DVPEEDLPTTEDEQINILPDDSTEE) is disordered. Residues 332 to 344 (VPEEDLPTTEDEQ) are compositionally biased toward acidic residues.

This sequence belongs to the RecA family.

The protein localises to the cytoplasm. Can catalyze the hydrolysis of ATP in the presence of single-stranded DNA, the ATP-dependent uptake of single-stranded DNA by duplex DNA, and the ATP-dependent hybridization of homologous single-stranded DNAs. It interacts with LexA causing its activation and leading to its autocatalytic cleavage. In Latilactobacillus sakei subsp. sakei (strain 23K) (Lactobacillus sakei subsp. sakei), this protein is Protein RecA.